A 162-amino-acid chain; its full sequence is Phosphopantetheine adenylyltransferase (162 aa).

Position 11 (serine 11) interacts with substrate. Residues 11–12 (SF) and histidine 19 each bind ATP. Substrate contacts are provided by lysine 43, valine 76, and arginine 90. Residues 91–93 (GLR), glutamate 101, and 126–132 (HLYISSS) each bind ATP.

It belongs to the bacterial CoaD family. As to quaternary structure, homohexamer. The cofactor is Mg(2+).

The protein localises to the cytoplasm. The catalysed reaction is (R)-4'-phosphopantetheine + ATP + H(+) = 3'-dephospho-CoA + diphosphate. It participates in cofactor biosynthesis; coenzyme A biosynthesis; CoA from (R)-pantothenate: step 4/5. In terms of biological role, reversibly transfers an adenylyl group from ATP to 4'-phosphopantetheine, yielding dephospho-CoA (dPCoA) and pyrophosphate. This chain is Phosphopantetheine adenylyltransferase, found in Streptococcus pneumoniae (strain JJA).